A 312-amino-acid chain; its full sequence is Tyrosine recombinase XerC (312 aa).

The 103-residue stretch at 1 to 103 folds into the Core-binding (CB) domain; the sequence is MISAFYAFLD…AIKSFSQYCI (103 aa). Residues 124 to 306 form the Tyr recombinase domain; it reads ELPSPITYEQ…SMKLKKQTHE (183 aa). Residues arginine 164, lysine 188, histidine 258, arginine 261, and histidine 284 contribute to the active site. Tyrosine 293 serves as the catalytic O-(3'-phospho-DNA)-tyrosine intermediate.

Belongs to the 'phage' integrase family. XerC subfamily. Forms a cyclic heterotetrameric complex composed of two molecules of XerC and two molecules of XerD.

It is found in the cytoplasm. Functionally, site-specific tyrosine recombinase, which acts by catalyzing the cutting and rejoining of the recombining DNA molecules. The XerC-XerD complex is essential to convert dimers of the bacterial chromosome into monomers to permit their segregation at cell division. It also contributes to the segregational stability of plasmids. In Chlamydia caviae (strain ATCC VR-813 / DSM 19441 / 03DC25 / GPIC) (Chlamydophila caviae), this protein is Tyrosine recombinase XerC.